The primary structure comprises 910 residues: Chitin synthase A (910 aa).

The tract at residues 56–156 (NYHDDYDPRP…EPAPTPTPAP (101 aa)) is disordered. Composition is skewed to basic and acidic residues over residues 57–84 (YHDD…HHDA) and 130–148 (DPHD…HDEP). 9 helical membrane-spanning segments follow: residues 366–386 (WFFQ…IDAG), 448–468 (SAFG…YVAL), 583–603 (VYQT…FLVF), 620–640 (VLFI…FILS), 655–675 (MVYF…FITV), 701–721 (TLII…IIFL), 730–750 (FIQY…YAFC), 828–848 (GVVL…LQAG), and 876–896 (LYSV…FLVV).

The protein belongs to the chitin synthase family. Class I subfamily.

It localises to the cell membrane. The catalysed reaction is [(1-&gt;4)-N-acetyl-beta-D-glucosaminyl](n) + UDP-N-acetyl-alpha-D-glucosamine = [(1-&gt;4)-N-acetyl-beta-D-glucosaminyl](n+1) + UDP + H(+). Polymerizes chitin, a structural polymer of the cell wall and septum, by transferring the sugar moiety of UDP-GlcNAc to the non-reducing end of the growing chitin polymer. The protein is Chitin synthase A (CHSA) of Ampelomyces quisqualis (Powdery mildew agent).